Reading from the N-terminus, the 355-residue chain is Elongation factor Ts (355 aa).

Positions Thr-82–Val-85 are involved in Mg(2+) ion dislocation from EF-Tu.

This sequence belongs to the EF-Ts family.

It localises to the cytoplasm. Functionally, associates with the EF-Tu.GDP complex and induces the exchange of GDP to GTP. It remains bound to the aminoacyl-tRNA.EF-Tu.GTP complex up to the GTP hydrolysis stage on the ribosome. The protein is Elongation factor Ts of Helicobacter hepaticus (strain ATCC 51449 / 3B1).